A 347-amino-acid chain; its full sequence is N-acetyl-gamma-glutamyl-phosphate reductase (347 aa).

Cysteine 152 is a catalytic residue.

It belongs to the NAGSA dehydrogenase family. Type 1 subfamily.

The protein localises to the cytoplasm. It carries out the reaction N-acetyl-L-glutamate 5-semialdehyde + phosphate + NADP(+) = N-acetyl-L-glutamyl 5-phosphate + NADPH + H(+). Its pathway is amino-acid biosynthesis; L-arginine biosynthesis; N(2)-acetyl-L-ornithine from L-glutamate: step 3/4. In terms of biological role, catalyzes the NADPH-dependent reduction of N-acetyl-5-glutamyl phosphate to yield N-acetyl-L-glutamate 5-semialdehyde. In Ehrlichia ruminantium (strain Gardel), this protein is N-acetyl-gamma-glutamyl-phosphate reductase.